The chain runs to 50 residues: Large ribosomal subunit protein bL32A (50 aa).

Residues 1–19 (MAVPKRRKSRSNTRHRRSQ) are compositionally biased toward basic residues. Positions 1-21 (MAVPKRRKSRSNTRHRRSQWK) are disordered.

It belongs to the bacterial ribosomal protein bL32 family.

The polypeptide is Large ribosomal subunit protein bL32A (Saccharopolyspora erythraea (strain ATCC 11635 / DSM 40517 / JCM 4748 / NBRC 13426 / NCIMB 8594 / NRRL 2338)).